A 152-amino-acid polypeptide reads, in one-letter code: UPF0178 protein YaiI (152 aa).

Belongs to the UPF0178 family.

The sequence is that of UPF0178 protein YaiI from Shigella flexneri.